The primary structure comprises 699 residues: tRNA wybutosine-synthesizing protein 4 (699 aa).

S-adenosyl-L-methionine-binding positions include R94, G120, D151, 197 to 198, and E224; that span reads DL.

This sequence belongs to the methyltransferase superfamily. LCMT family.

It catalyses the reaction 7-[(3S)-3-amino-3-carboxypropyl]wyosine(37) in tRNA(Phe) + S-adenosyl-L-methionine = 7-[(3S)-(3-amino-3-methoxycarbonyl)propyl]wyosine(37) in tRNA(Phe) + S-adenosyl-L-homocysteine. The catalysed reaction is 7-[(3S)-(3-amino-3-methoxycarbonyl)propyl]wyosine(37) in tRNA(Phe) + S-adenosyl-L-methionine + CO2 = wybutosine(37) in tRNA(Phe) + S-adenosyl-L-homocysteine + 2 H(+). It functions in the pathway tRNA modification; wybutosine-tRNA(Phe) biosynthesis. Probable S-adenosyl-L-methionine-dependent methyltransferase that acts as a component of the wybutosine biosynthesis pathway. Wybutosine is a hyper modified guanosine with a tricyclic base found at the 3'-position adjacent to the anticodon of eukaryotic phenylalanine tRNA. May methylate the carboxyl group of leucine residues to form alpha-leucine ester residues. This Eremothecium gossypii (strain ATCC 10895 / CBS 109.51 / FGSC 9923 / NRRL Y-1056) (Yeast) protein is tRNA wybutosine-synthesizing protein 4 (PPM2).